We begin with the raw amino-acid sequence, 254 residues long: Chaperone protein PmfD (254 aa).

The signal sequence occupies residues 1-26; the sequence is MNSFSTLKTLFCGSLLALSLVNTTQA.

This sequence belongs to the periplasmic pilus chaperone family.

The protein localises to the periplasm. Functionally, involved in the biogenesis of the PMF fimbria. The sequence is that of Chaperone protein PmfD (pmfD) from Proteus mirabilis (strain HI4320).